Reading from the N-terminus, the 190-residue chain is uncharacterized protein (190 aa).

Topologically, residues 1 to 55 (MSRLRRFNRKILSLSSDYTHDGESDQEDVSILPLDTEEQEELIQKFETNAHITNK) are cytoplasmic. The helical transmembrane segment at 56–76 (LYINLLSILYLLYGGLLMILV) threads the bilayer. At 77 to 80 (RKSR) the chain is on the extracellular side. The helical transmembrane segment at 81-101 (GYIKLALLAGANSLICSCITL) threads the bilayer. The Cytoplasmic segment spans residues 102-123 (RYDIVNDYLLFKKFKLRVSNFS). Residues 124–144 (INIINIILLVLMAWISFNHVV) form a helical membrane-spanning segment. Residues 145 to 149 (EDKKT) lie on the Extracellular side of the membrane. The helical transmembrane segment at 150–170 (VLCLQVPMFLFWVAVLVKRWA) threads the bilayer. Topologically, residues 171 to 190 (RNIEDEIADLRCLKYKYKNA) are cytoplasmic.

It localises to the membrane. This is an uncharacterized protein from Saccharomyces cerevisiae (strain ATCC 204508 / S288c) (Baker's yeast).